The following is a 607-amino-acid chain: Probable CoA ligase CCL8 (607 aa).

ATP is bound by residues 236–244 (TSGTTGKPK), 391–396 (ERYGMT), D474, 486–489 (ILGR), and K591. The segment at 305–391 (SVRGIWQRWR…QTITGHRLLE (87 aa)) is SBD1. Residues 392–453 (RYGMTEFVMA…VRSPSLFKEY (62 aa)) are SBD2.

The protein belongs to the ATP-dependent AMP-binding enzyme family. Mostly expressed at low levels in glandular trichomes (lupulin glands) after flowering, and, to a lower extent, in stems, leaves, flowers and cones.

It localises to the cytoplasm. The protein resides in the cytosol. The chain is Probable CoA ligase CCL8 from Humulus lupulus (European hop).